Consider the following 197-residue polypeptide: RILP-like protein 2 (197 aa).

The interval 1–24 (MEDHPVREEEDGEEDEGALAKSPL) is disordered. Positions 8–17 (EEEDGEEDEG) are enriched in acidic residues. The region spanning 14-96 (EDEGALAKSP…KQEVEGLRKA (83 aa)) is the RH1 domain. The stretch at 69–153 (VNEGSLAVEE…VQEELQCYRS (85 aa)) forms a coiled coil. An RH2 domain is found at 119 to 184 (RPRFTLQELR…GNGEKEERTI (66 aa)).

Belongs to the RILPL family. As to quaternary structure, homodimer. Interacts with RAC1. Interacts (via N-terminus) with MYO5A, the interaction is required for its role in dendrite formation. Interacts with RAB8A; interaction is dependent on the phosphorylation of RAB8A on 'Thr-72'. Interacts with RAB10 and RAB12; interaction is dependent on the phosphorylation of 'Thr-73' on RAB10 and 'Ser-105' on RAB12.

The protein resides in the cytoplasm. The protein localises to the cytosol. It is found in the cytoskeleton. It localises to the microtubule organizing center. Its subcellular location is the centrosome. The protein resides in the cell projection. The protein localises to the cilium. Involved in cell shape and neuronal morphogenesis, positively regulating the establishment and maintenance of dendritic spines. Plays a role in cellular protein transport, including protein transport away from primary cilia. May function via activation of RAC1 and PAK1. The protein is RILP-like protein 2 (Rilpl2) of Mus musculus (Mouse).